A 78-amino-acid polypeptide reads, in one-letter code: Translation initiation factor IF-1, chloroplastic (78 aa).

Positions 1–72 (MKKQNLIDME…TKGRITYRLR (72 aa)) constitute an S1-like domain.

The protein belongs to the IF-1 family. In terms of assembly, component of the 30S ribosomal translation pre-initiation complex which assembles on the 30S ribosome in the order IF-2 and IF-3, IF-1 and N-formylmethionyl-tRNA(fMet); mRNA recruitment can occur at any time during PIC assembly.

The protein localises to the plastid. It is found in the chloroplast. Its function is as follows. One of the essential components for the initiation of protein synthesis. Stabilizes the binding of IF-2 and IF-3 on the 30S subunit to which N-formylmethionyl-tRNA(fMet) subsequently binds. Helps modulate mRNA selection, yielding the 30S pre-initiation complex (PIC). Upon addition of the 50S ribosomal subunit IF-1, IF-2 and IF-3 are released leaving the mature 70S translation initiation complex. In Physcomitrium patens (Spreading-leaved earth moss), this protein is Translation initiation factor IF-1, chloroplastic.